The following is a 326-amino-acid chain: Ribosomal large subunit pseudouridine synthase D (326 aa).

Aspartate 144 is a catalytic residue.

It belongs to the pseudouridine synthase RluA family.

Its subcellular location is the cytoplasm. The catalysed reaction is uridine(1911/1915/1917) in 23S rRNA = pseudouridine(1911/1915/1917) in 23S rRNA. Its function is as follows. Responsible for synthesis of pseudouridine from uracil at positions 1911, 1915 and 1917 in 23S ribosomal RNA. The sequence is that of Ribosomal large subunit pseudouridine synthase D from Borreliella burgdorferi (strain ATCC 35210 / DSM 4680 / CIP 102532 / B31) (Borrelia burgdorferi).